Reading from the N-terminus, the 182-residue chain is Bifunctional dihydrofolate reductase-thymidylate synthase (182 aa).

A DHFR domain is found at 1–182; sequence AICACCKVLN…YFTRINNAYT (182 aa). Position 25 to 31 (25 to 31) interacts with NADP(+); that stretch reads GLGNAGG. A substrate-binding site is contributed by Asp-40. NADP(+) contacts are provided by residues 93–95 and 114–117; these read KTS and LSRT. Substrate contacts are provided by Ile-154, Tyr-160, and Thr-175. NADP(+) is bound at residue 155–162; the sequence is GGASVYKE.

This sequence in the N-terminal section; belongs to the dihydrofolate reductase family. It in the C-terminal section; belongs to the thymidylate synthase family. Homodimer.

It catalyses the reaction (6S)-5,6,7,8-tetrahydrofolate + NADP(+) = 7,8-dihydrofolate + NADPH + H(+). The enzyme catalyses dUMP + (6R)-5,10-methylene-5,6,7,8-tetrahydrofolate = 7,8-dihydrofolate + dTMP. The protein operates within cofactor biosynthesis; tetrahydrofolate biosynthesis; 5,6,7,8-tetrahydrofolate from 7,8-dihydrofolate: step 1/1. In terms of biological role, bifunctional enzyme. Involved in de novo dTMP biosynthesis. Key enzyme in folate metabolism. Catalyzes an essential reaction for de novo glycine and purine synthesis, DNA precursor synthesis, and for the conversion of dUMP to dTMP. The protein is Bifunctional dihydrofolate reductase-thymidylate synthase of Plasmodium vinckei.